The sequence spans 422 residues: MRKTKFWLVLSLIATSLSIFACKKDSTATKNPIPEVSKAKASTKLLNATTVATTDYELIWSDEFNSSGGFDSTKWSYADRGTVAWNKYMTSLPAYASQDGSNLVLRMDNAVVAGDPVAYHAGGVKSMGKFSMTYGKVEVRAKFTQGRGSWPAIWMMPEPATAYGGWPSCGEIDSMEHVNNESVMYHTIHNGSVTNANGGSTASKSATYNTTDYNLYTMIWSPNDIRFYVNNSLQYTYARVSGGGTQQWPFDVPFYLILNQAGGAGWPGAITNADLPFSMQVDYVRVYKLPLFSNGDFESGVIYPWTTWGGGSSVVSTDARTGTKCIRETGGETSIEQYLTGLTPNTTYRFGGYAKVSAAGQSVSIGVKNYGGTAVDATIGTTSYSNNSVTFTTGANNTTATVYFYKPLSGTVYGDDFYLEKL.

The first 46 residues, 1 to 46 (MRKTKFWLVLSLIATSLSIFACKKDSTATKNPIPEVSKAKASTKLL), serve as a signal peptide directing secretion. Residues 47–292 (NATTVATTDY…YVRVYKLPLF (246 aa)) enclose the GH16 domain. Glu171 acts as the Nucleophile in catalysis. Glu176 (proton donor) is an active-site residue. Residues 291–406 (LFSNGDFESG…NTTATVYFYK (116 aa)) enclose the CBM-cenC domain.

Belongs to the glycosyl hydrolase 16 family.

It localises to the secreted. It catalyses the reaction Endohydrolysis of (1-&gt;4)-beta-D-galactosidic linkages in keratan sulfate.. Hydrolyzes internal endo-beta-galactosyl linkages in keratan sulfate and in various neolacto-type glycosphingolipids, producing sulfated and non-sulfated disaccharides, and glucosylceramides respectivly. This is Keratan-sulfate endo-1,4-beta-galactosidase from Sphingobacterium multivorum.